We begin with the raw amino-acid sequence, 310 residues long: 4-hydroxy-3-methylbut-2-enyl diphosphate reductase (310 aa).

Residue Cys13 participates in [4Fe-4S] cluster binding. (2E)-4-hydroxy-3-methylbut-2-enyl diphosphate contacts are provided by His42 and His75. Residues His42 and His75 each contribute to the dimethylallyl diphosphate site. Isopentenyl diphosphate contacts are provided by His42 and His75. Cys97 contacts [4Fe-4S] cluster. A (2E)-4-hydroxy-3-methylbut-2-enyl diphosphate-binding site is contributed by His125. His125 provides a ligand contact to dimethylallyl diphosphate. Residue His125 coordinates isopentenyl diphosphate. Glu127 (proton donor) is an active-site residue. Thr165 lines the (2E)-4-hydroxy-3-methylbut-2-enyl diphosphate pocket. Residue Cys195 participates in [4Fe-4S] cluster binding. Positions 223, 224, 225, and 267 each coordinate (2E)-4-hydroxy-3-methylbut-2-enyl diphosphate. Ser223, Ser224, Asn225, and Ser267 together coordinate dimethylallyl diphosphate. The isopentenyl diphosphate site is built by Ser223, Ser224, Asn225, and Ser267.

It belongs to the IspH family. It depends on [4Fe-4S] cluster as a cofactor.

The enzyme catalyses isopentenyl diphosphate + 2 oxidized [2Fe-2S]-[ferredoxin] + H2O = (2E)-4-hydroxy-3-methylbut-2-enyl diphosphate + 2 reduced [2Fe-2S]-[ferredoxin] + 2 H(+). It carries out the reaction dimethylallyl diphosphate + 2 oxidized [2Fe-2S]-[ferredoxin] + H2O = (2E)-4-hydroxy-3-methylbut-2-enyl diphosphate + 2 reduced [2Fe-2S]-[ferredoxin] + 2 H(+). Its pathway is isoprenoid biosynthesis; dimethylallyl diphosphate biosynthesis; dimethylallyl diphosphate from (2E)-4-hydroxy-3-methylbutenyl diphosphate: step 1/1. The protein operates within isoprenoid biosynthesis; isopentenyl diphosphate biosynthesis via DXP pathway; isopentenyl diphosphate from 1-deoxy-D-xylulose 5-phosphate: step 6/6. Catalyzes the conversion of 1-hydroxy-2-methyl-2-(E)-butenyl 4-diphosphate (HMBPP) into a mixture of isopentenyl diphosphate (IPP) and dimethylallyl diphosphate (DMAPP). Acts in the terminal step of the DOXP/MEP pathway for isoprenoid precursor biosynthesis. This Chlamydia pneumoniae (Chlamydophila pneumoniae) protein is 4-hydroxy-3-methylbut-2-enyl diphosphate reductase.